We begin with the raw amino-acid sequence, 130 residues long: Small ribosomal subunit protein uS11 (130 aa).

It belongs to the universal ribosomal protein uS11 family. As to quaternary structure, part of the 30S ribosomal subunit. Interacts with proteins S7 and S18. Binds to IF-3.

Functionally, located on the platform of the 30S subunit, it bridges several disparate RNA helices of the 16S rRNA. Forms part of the Shine-Dalgarno cleft in the 70S ribosome. The protein is Small ribosomal subunit protein uS11 of Moorella thermoacetica (strain ATCC 39073 / JCM 9320).